Consider the following 367-residue polypeptide: UDP-galactopyranose mutase (367 aa).

FAD contacts are provided by residues phenylalanine 12, 31–32 (EK), asparagine 39, and 56–57 (HI). Residue phenylalanine 12 coordinates UDP-alpha-D-galactose. UDP-alpha-D-galactose contacts are provided by asparagine 80, threonine 152, tryptophan 156, and tyrosine 181. Residue 212–213 (DF) coordinates FAD. UDP-alpha-D-galactose contacts are provided by asparagine 268, arginine 278, and tyrosine 311. Arginine 340 serves as a coordination point for FAD. Tyrosine 346 lines the UDP-alpha-D-galactose pocket. 347–352 (YDMHQV) provides a ligand contact to FAD.

As to quaternary structure, homodimer. FAD serves as cofactor.

The catalysed reaction is UDP-alpha-D-galactose = UDP-alpha-D-galactofuranose. Its pathway is bacterial outer membrane biogenesis; lipopolysaccharide biosynthesis. Catalyzes the interconversion through a 2-keto intermediate of uridine diphosphogalactopyranose (UDP-GalP) into uridine diphosphogalactofuranose (UDP-GalF). The polypeptide is UDP-galactopyranose mutase (glf) (Escherichia coli (strain K12)).